The chain runs to 432 residues: 3-phosphoshikimate 1-carboxyvinyltransferase (432 aa).

3-phosphoshikimate is bound by residues lysine 22, serine 23, and arginine 27. Lysine 22 provides a ligand contact to phosphoenolpyruvate. Phosphoenolpyruvate is bound by residues glycine 96 and arginine 127. Residues serine 173, serine 174, glutamine 175, serine 201, aspartate 316, asparagine 339, and lysine 343 each coordinate 3-phosphoshikimate. A phosphoenolpyruvate-binding site is contributed by glutamine 175. The Proton acceptor role is filled by aspartate 316. The phosphoenolpyruvate site is built by arginine 347, arginine 391, and lysine 416.

It belongs to the EPSP synthase family. As to quaternary structure, monomer.

The protein resides in the cytoplasm. The catalysed reaction is 3-phosphoshikimate + phosphoenolpyruvate = 5-O-(1-carboxyvinyl)-3-phosphoshikimate + phosphate. It participates in metabolic intermediate biosynthesis; chorismate biosynthesis; chorismate from D-erythrose 4-phosphate and phosphoenolpyruvate: step 6/7. Its function is as follows. Catalyzes the transfer of the enolpyruvyl moiety of phosphoenolpyruvate (PEP) to the 5-hydroxyl of shikimate-3-phosphate (S3P) to produce enolpyruvyl shikimate-3-phosphate and inorganic phosphate. The polypeptide is 3-phosphoshikimate 1-carboxyvinyltransferase (Histophilus somni (Haemophilus somnus)).